We begin with the raw amino-acid sequence, 213 residues long: LexA repressor (213 aa).

The H-T-H motif DNA-binding region spans 31–51 (RAEISRELGFRSPNAAEEYLK). Catalysis depends on for autocatalytic cleavage activity residues serine 129 and lysine 166.

It belongs to the peptidase S24 family. As to quaternary structure, homodimer.

It carries out the reaction Hydrolysis of Ala-|-Gly bond in repressor LexA.. Represses a number of genes involved in the response to DNA damage (SOS response), including recA and lexA. In the presence of single-stranded DNA, RecA interacts with LexA causing an autocatalytic cleavage which disrupts the DNA-binding part of LexA, leading to derepression of the SOS regulon and eventually DNA repair. The protein is LexA repressor of Mannheimia succiniciproducens (strain KCTC 0769BP / MBEL55E).